Reading from the N-terminus, the 354-residue chain is Phospho-N-acetylmuramoyl-pentapeptide-transferase (354 aa).

The next 10 helical transmembrane spans lie at 16 to 36 (YITVRAGIAFFFAFFLTLYLM), 66 to 86 (TPTMGGVVFIFSALLASLLTV), 88 to 108 (IHNPYVLGGFLTILGFLAIGV), 130 to 150 (FFLQILVAFVVSLFLYEYAHL), 168 to 188 (IFGILFWTLVIVATSNAVNLT), 193 to 213 (GLATVPSIMALTTLAIITYIT), 227 to 247 (IIGVGEVSIIAAAFAGSLIGF), 257 to 277 (VFMGDSGSLTLGAFIGYMAII), 282 to 302 (VLLILIGFVFVMEALSVIIQV), and 331 to 351 (KIIVRFWIIALISNLIALITL).

This sequence belongs to the glycosyltransferase 4 family. MraY subfamily. Mg(2+) is required as a cofactor.

It localises to the cell inner membrane. It carries out the reaction UDP-N-acetyl-alpha-D-muramoyl-L-alanyl-gamma-D-glutamyl-meso-2,6-diaminopimeloyl-D-alanyl-D-alanine + di-trans,octa-cis-undecaprenyl phosphate = di-trans,octa-cis-undecaprenyl diphospho-N-acetyl-alpha-D-muramoyl-L-alanyl-D-glutamyl-meso-2,6-diaminopimeloyl-D-alanyl-D-alanine + UMP. The protein operates within cell wall biogenesis; peptidoglycan biosynthesis. In terms of biological role, catalyzes the initial step of the lipid cycle reactions in the biosynthesis of the cell wall peptidoglycan: transfers peptidoglycan precursor phospho-MurNAc-pentapeptide from UDP-MurNAc-pentapeptide onto the lipid carrier undecaprenyl phosphate, yielding undecaprenyl-pyrophosphoryl-MurNAc-pentapeptide, known as lipid I. The chain is Phospho-N-acetylmuramoyl-pentapeptide-transferase from Nitratiruptor sp. (strain SB155-2).